We begin with the raw amino-acid sequence, 285 residues long: Transcription factor E2F6 (285 aa).

Residue K9 forms a Glycyl lysine isopeptide (Lys-Gly) (interchain with G-Cter in SUMO2) linkage. Residues 50–129 (YVSMRKALKV…SKNHIRWIGS (80 aa)) mediate DNA binding. The DEF box motif lies at 95–129 (KLGVRKRRVYDITNVLDGIDLVEKKSKNHIRWIGS). The dimerization stretch occupies residues 130-222 (DLSNFGAVPQ…PAPKEDSITV (93 aa)). A leucine-zipper region spans residues 143-164 (LQEELSDLSAMEDALDELIKDC). Positions 173 to 285 (DDKENERLAY…QSEEVLEVSN (113 aa)) are transcription repression. The segment at 240–285 (QGSHSSNKTSDNVGTSSSKSKPLEHPQPEKEENPPQQSEEVLEVSN) is disordered. The segment covering 241–259 (GSHSSNKTSDNVGTSSSKS) has biased composition (polar residues). Residues 260–272 (KPLEHPQPEKEEN) are compositionally biased toward basic and acidic residues.

It belongs to the E2F/DP family. As to quaternary structure, forms heterodimers with DP family members TFDP1 or TFDP2. Component of the DRTF1/E2F transcription factor complex. Part of the E2F6.com-1 complex in G0 phase composed of E2F6, MGA, MAX, TFDP1, CBX3, BAT8, EUHMTASE1, RING1, RNF2, MBLR, L3MBTL2 and YAF2. Component of some MLL1/MLL complex, at least composed of the core components KMT2A/MLL1, ASH2L, HCFC1/HCF1, WDR5 and RBBP5, as well as the facultative components BACC1, CHD8, E2F6, HSP70, INO80C, KANSL1, LAS1L, MAX, MCRS1, MGA, KAT8/MOF, PELP1, PHF20, PRP31, RING2, RUVB1/TIP49A, RUVB2/TIP49B, SENP3, TAF1, TAF4, TAF6, TAF7, TAF9 and TEX10.

It localises to the nucleus. Functionally, inhibitor of E2F-dependent transcription. Binds DNA cooperatively with DP proteins through the E2 recognition site, 5'-TTTC[CG]CGC-3'. Has a preference for the 5'-TTTCCCGC-3' E2F recognition site. E2F6 lacks the transcriptional activation and pocket protein binding domains. Appears to regulate a subset of E2F-dependent genes whose products are required for entry into the cell cycle but not for normal cell cycle progression. Represses expression of some meiosis-specific genes, including SLC25A31/ANT4. May silence expression via the recruitment of a chromatin remodeling complex containing histone H3-K9 methyltransferase activity. Overexpression delays the exit of cells from the S-phase. The chain is Transcription factor E2F6 from Bos taurus (Bovine).